A 711-amino-acid polypeptide reads, in one-letter code: Quinolinate synthase, chloroplastic (711 aa).

A chloroplast-targeting transit peptide spans 1-41; that stretch reads MDVSSLAAAAPSLVAPPLHHKPHLAFPPHHPSPARGSIGVR. The interval 17 to 63 is disordered; the sequence is PLHHKPHLAFPPHHPSPARGSIGVRCAHSPSPHPLRPSAATADEEVS. The active-site Cysteine persulfide intermediate is Cys114. Iminosuccinate-binding residues include His263 and Ser289. Position 343 (Cys343) interacts with [4Fe-4S] cluster. Residues 372–374 and Ser394 each bind iminosuccinate; that span reads YIN. Residue Cys467 participates in [4Fe-4S] cluster binding. Iminosuccinate-binding positions include 493–495 and Thr518; that span reads HFE. Residue Cys631 coordinates [4Fe-4S] cluster.

It belongs to the quinolinate synthase family. Type 1 subfamily. As to quaternary structure, homodimer. [4Fe-4S] cluster is required as a cofactor.

It is found in the plastid. Its subcellular location is the chloroplast. It carries out the reaction iminosuccinate + dihydroxyacetone phosphate = quinolinate + phosphate + 2 H2O + H(+). It functions in the pathway cofactor biosynthesis; NAD(+) biosynthesis; quinolinate from iminoaspartate: step 1/1. Catalyzes the condensation of iminoaspartate with dihydroxyacetone phosphate to form quinolinate. The polypeptide is Quinolinate synthase, chloroplastic (Oryza sativa subsp. japonica (Rice)).